We begin with the raw amino-acid sequence, 382 residues long: Histidine biosynthesis bifunctional protein HisB (382 aa).

Positions 1-190 (MQKIVFIDRD…EIYEFLRLPA (190 aa)) are histidinol-phosphatase. D8 serves as the catalytic Nucleophile. Mg(2+) is bound by residues D8, D10, and D129. The active-site Proton donor is D10. An imidazoleglycerol-phosphate dehydratase region spans residues 191–382 (RTALVERNTK…DNLPSTKGVL (192 aa)).

This sequence in the N-terminal section; belongs to the histidinol-phosphatase family. The protein in the C-terminal section; belongs to the imidazoleglycerol-phosphate dehydratase family. The cofactor is Mg(2+).

Its subcellular location is the cytoplasm. It carries out the reaction D-erythro-1-(imidazol-4-yl)glycerol 3-phosphate = 3-(imidazol-4-yl)-2-oxopropyl phosphate + H2O. The catalysed reaction is L-histidinol phosphate + H2O = L-histidinol + phosphate. It participates in amino-acid biosynthesis; L-histidine biosynthesis; L-histidine from 5-phospho-alpha-D-ribose 1-diphosphate: step 6/9. Its pathway is amino-acid biosynthesis; L-histidine biosynthesis; L-histidine from 5-phospho-alpha-D-ribose 1-diphosphate: step 8/9. This chain is Histidine biosynthesis bifunctional protein HisB, found in Spirosoma linguale (strain ATCC 33905 / DSM 74 / LMG 10896 / Claus 1).